The following is a 304-amino-acid chain: Small glutamine-rich tetratricopeptide repeat-containing protein beta (304 aa).

TPR repeat units lie at residues 15-49 (LREQ…SPED), 85-118 (ADQL…DPNN), 120-152 (VYYC…DSKY), and 153-186 (SKAY…DPEN). K131 carries the N6-acetyllysine modification. Phosphoserine is present on residues S293, S295, and S297.

The protein belongs to the SGT family. As to quaternary structure, homooligomerize. As to expression, expressed specifically in brain.

Functionally, co-chaperone that binds directly to HSC70 and HSP70 and regulates their ATPase activity. The sequence is that of Small glutamine-rich tetratricopeptide repeat-containing protein beta (Sgtb) from Rattus norvegicus (Rat).